Reading from the N-terminus, the 399-residue chain is Developmentally-regulated G-protein 1 (399 aa).

The region spanning 63–288 (GRVALIGFPS…LLARMWDEMG (226 aa)) is the OBG-type G domain. GTP contacts are provided by residues 69 to 76 (GFPSVGKS), 115 to 119 (DLPGI), and 246 to 249 (NKID). In terms of domain architecture, TGS spans 288 to 366 (GLVRVYSKPQ…EDEDVVQIVK (79 aa)). Residues 367 to 399 (KKERDEGGRGRFKSHSNAPARIADREKKAPLKQ) are disordered. Residues 388 to 399 (IADREKKAPLKQ) show a composition bias toward basic and acidic residues.

It belongs to the TRAFAC class OBG-HflX-like GTPase superfamily. OBG GTPase family. As to expression, expressed in actively growing tissues and reproductive organs. Mostly expressed in leaves, stems and siliques. Also present in flowers and flower buds, and, to a lower extent, in roots.

It is found in the cytoplasmic vesicle. Its subcellular location is the cytoplasm. Binds GDP and GTP, and has low GTPase activity. May interact with phosphatidic acid (PA). This Arabidopsis thaliana (Mouse-ear cress) protein is Developmentally-regulated G-protein 1 (DRG1).